The sequence spans 192 residues: Fe/S biogenesis protein NfuA (192 aa).

[4Fe-4S] cluster contacts are provided by Cys-149 and Cys-152.

The protein belongs to the NfuA family. Homodimer. [4Fe-4S] cluster serves as cofactor.

Involved in iron-sulfur cluster biogenesis. Binds a 4Fe-4S cluster, can transfer this cluster to apoproteins, and thereby intervenes in the maturation of Fe/S proteins. Could also act as a scaffold/chaperone for damaged Fe/S proteins. In Shewanella sp. (strain ANA-3), this protein is Fe/S biogenesis protein NfuA.